The following is a 326-amino-acid chain: Beta-ketoacyl-[acyl-carrier-protein] synthase III (326 aa).

Catalysis depends on residues Cys-120 and His-253. Residues 254–258 (QANIR) form an ACP-binding region. The active site involves Asn-283.

The protein belongs to the thiolase-like superfamily. FabH family. As to quaternary structure, homodimer.

It localises to the cytoplasm. It catalyses the reaction malonyl-[ACP] + acetyl-CoA + H(+) = 3-oxobutanoyl-[ACP] + CO2 + CoA. It participates in lipid metabolism; fatty acid biosynthesis. Its function is as follows. Catalyzes the condensation reaction of fatty acid synthesis by the addition to an acyl acceptor of two carbons from malonyl-ACP. Catalyzes the first condensation reaction which initiates fatty acid synthesis and may therefore play a role in governing the total rate of fatty acid production. Possesses both acetoacetyl-ACP synthase and acetyl transacylase activities. Its substrate specificity determines the biosynthesis of branched-chain and/or straight-chain of fatty acids. The chain is Beta-ketoacyl-[acyl-carrier-protein] synthase III from Cupriavidus pinatubonensis (strain JMP 134 / LMG 1197) (Cupriavidus necator (strain JMP 134)).